A 496-amino-acid polypeptide reads, in one-letter code: Lysine--tRNA ligase (496 aa).

Residues Glu-403 and Glu-410 each contribute to the Mg(2+) site.

The protein belongs to the class-II aminoacyl-tRNA synthetase family. In terms of assembly, homodimer. Requires Mg(2+) as cofactor.

It is found in the cytoplasm. The enzyme catalyses tRNA(Lys) + L-lysine + ATP = L-lysyl-tRNA(Lys) + AMP + diphosphate. The chain is Lysine--tRNA ligase from Aster yellows witches'-broom phytoplasma (strain AYWB).